The chain runs to 766 residues: Alpha-onocerin synthase LCD (766 aa).

7 PFTB repeats span residues 101 to 143, 151 to 192, 456 to 507, 517 to 558, 594 to 634, 643 to 684, and 705 to 752; these read LCRA…GALD, QREI…RLMG, QESY…STTD, IHEC…PGYK, IQEG…LASG, IQRA…HVVH, and LHRA…WALG. Catalysis depends on aspartate 488, which acts as the Proton donor.

It belongs to the terpene cyclase/mutase family.

The enzyme catalyses pre-alpha-onocerin = alpha-onocerin. The protein operates within secondary metabolite biosynthesis; terpenoid biosynthesis. Its function is as follows. Oxidosqualene cyclase involved in the biosynthesis of alpha-onocerin, a triterpenoid characterized by a symmetrical structure due to cyclizations at both termini of dioxidosqualene that inhibits acetylcholinesterase. Catalyzes the second half of the cyclization, exclusively from pre-alpha-onocerin. The chain is Alpha-onocerin synthase LCD from Lycopodium clavatum (Stag's-horn clubmoss).